We begin with the raw amino-acid sequence, 186 residues long: Translation initiation factor IF-3 (186 aa).

The tract at residues M1–L20 is disordered.

The protein belongs to the IF-3 family. In terms of assembly, monomer.

It localises to the cytoplasm. Functionally, IF-3 binds to the 30S ribosomal subunit and shifts the equilibrium between 70S ribosomes and their 50S and 30S subunits in favor of the free subunits, thus enhancing the availability of 30S subunits on which protein synthesis initiation begins. This Borrelia duttonii (strain Ly) protein is Translation initiation factor IF-3.